Here is a 286-residue protein sequence, read N- to C-terminus: ATP synthase gamma chain (286 aa).

It belongs to the ATPase gamma chain family. In terms of assembly, F-type ATPases have 2 components, CF(1) - the catalytic core - and CF(0) - the membrane proton channel. CF(1) has five subunits: alpha(3), beta(3), gamma(1), delta(1), epsilon(1). CF(0) has three main subunits: a, b and c.

It localises to the cell membrane. Functionally, produces ATP from ADP in the presence of a proton gradient across the membrane. The gamma chain is believed to be important in regulating ATPase activity and the flow of protons through the CF(0) complex. In Bacillus anthracis (strain A0248), this protein is ATP synthase gamma chain.